Consider the following 72-residue polypeptide: DNA-directed RNA polymerase subunit Rpo10 (72 aa).

Cys-7, Cys-10, Cys-45, and Cys-46 together coordinate Zn(2+).

Belongs to the archaeal Rpo10/eukaryotic RPB10 RNA polymerase subunit family. Part of the RNA polymerase complex. It depends on Zn(2+) as a cofactor.

The protein resides in the cytoplasm. It catalyses the reaction RNA(n) + a ribonucleoside 5'-triphosphate = RNA(n+1) + diphosphate. Functionally, DNA-dependent RNA polymerase (RNAP) catalyzes the transcription of DNA into RNA using the four ribonucleoside triphosphates as substrates. The polypeptide is DNA-directed RNA polymerase subunit Rpo10 (Methanopyrus kandleri (strain AV19 / DSM 6324 / JCM 9639 / NBRC 100938)).